A 693-amino-acid polypeptide reads, in one-letter code: Polyribonucleotide nucleotidyltransferase (693 aa).

Mg(2+)-binding residues include D485 and D491. A KH domain is found at 552 to 611; sequence PRIETMQINTSKIATVIGPGGKQIRQIIERSGAQVDINDNGLINISANTQESIDKAKELI. The S1 motif domain maps to 621-689; it reads GKIYNGRVTS…EKGQLKLSHK (69 aa).

It belongs to the polyribonucleotide nucleotidyltransferase family. The cofactor is Mg(2+).

Its subcellular location is the cytoplasm. The enzyme catalyses RNA(n+1) + phosphate = RNA(n) + a ribonucleoside 5'-diphosphate. Involved in mRNA degradation. Catalyzes the phosphorolysis of single-stranded polyribonucleotides processively in the 3'- to 5'-direction. This Chlamydia muridarum (strain MoPn / Nigg) protein is Polyribonucleotide nucleotidyltransferase.